The sequence spans 232 residues: Probable intron-encoded endonuclease aI3 (232 aa).

Belongs to the LAGLIDADG endonuclease family.

The protein localises to the mitochondrion. Its function is as follows. Mitochondrial DNA endonuclease involved in intron homing. The polypeptide is Probable intron-encoded endonuclease aI3 (aI3) (Dictyostelium discoideum (Social amoeba)).